The primary structure comprises 1557 residues: Target of rapamycin complex 1 subunit KOG1 (1557 aa).

HEAT repeat units lie at residues R548–Y586, S588–K625, C777–D814, and R888–N925. Low complexity predominate over residues S1084–S1098. The tract at residues S1084–L1114 is disordered. 7 WD repeats span residues N1207–S1248, P1252–K1293, S1296–D1346, K1350–M1390, K1400–S1440, S1452–K1492, and T1517–F1557.

Belongs to the WD repeat RAPTOR family. In terms of assembly, the target of rapamycin complex 1 (TORC1) is composed of at least KOG1, LST8, TCO89 and either TOR1 (TORC1-A) or TOR2 (TORC1-B). Interacts with PIB2; following activation of PIB2 by glutamine or cysteine. TORC1 binds to and is inhibited by FKBP-rapamycin.

The protein resides in the cell membrane. Its subcellular location is the vacuole membrane. Functionally, component of TORC1, which regulates multiple cellular processes to control cell growth in response to environmental signals. Nutrient limitation and environmental stress signals cause inactivation of TORC1. Active TORC1 positively controls ribosome biogenesis via control of rRNA, ribosomal protein and tRNA gene expression, and rRNA processing. TORC1 positively controls protein biosynthesis by regulation of mRNA stability, translation initiation factor activity, and high-affinity amino acid permeases that serve to provide amino acids for use by the translation machinery. TORC1 also promotes growth by sequestering a number of nutrient and general stress-responsive transcription factors in the cytoplasm. TORC1 negatively controls macroautophagy, a process to recycle surplus cytoplasmic mass under nutrient starvation conditions. KOG1 may have a role in binding and recruiting substrates of TORC1. This Saccharomyces cerevisiae (strain ATCC 204508 / S288c) (Baker's yeast) protein is Target of rapamycin complex 1 subunit KOG1 (KOG1).